The sequence spans 83 residues: uncharacterized protein (83 aa).

2 consecutive transmembrane segments (helical) span residues 23 to 43 (GGCY…SAIA) and 49 to 69 (SLWW…VVYG).

It localises to the cell membrane. This is an uncharacterized protein from Mycobacterium tuberculosis (strain CDC 1551 / Oshkosh).